The primary structure comprises 1049 residues: MGSHRRYLYYSILSFLLLSCSVVLAKQDKTPFFEGTSSKNSRLTAQDKGNDTCPPCFNCMLPIFECKQFSECNSYTGRCECIEGFAGDDCSLPLCGGLSPDESGNKDRPIRAQNDTCHCDNGWGGINCDVCQEDFVCDAFMPDPSIKGTCYKNGMIVDKVFSGCNVTNEKILQILNGKIPQITFACDKPNQECNFQFWIDQLESFYCGLSDCAFEYDLEQNTSHYKCNDVQCKCVPDTVLCGAKGSIDISDFLTETIKGPGDFSCDLETRQCKFSEPSMNDLILTVFGDPYITLKCESGECVHYSEIPGYKSPSKDPTVSWQGKLVLALTAVMVLALFTFATFYISKSPLFRNGLGSSKSPIRLPDEDAVNNFLQNEDDTLATLSFENITYSVPSINSDGVEETVLNEISGIVKPGQILAIMGGSGAGKTTLLDILAMKRKTGHVSGSIKVNGISMDRKSFSKIIGFVDQDDFLLPTLTVFETVLNSALLRLPKALSFEAKKARVYKVLEELRIIDIKDRIIGNEFDRGISGGEKRRVSIACELVTSPLVLFLDEPTSGLDASNANNVIECLVRLSSDYNRTLVLSIHQPRSNIFYLFDKLVLLSKGEMVYSGNAKKVSEFLRNEGYICPDNYNIADYLIDITFEAGPQGKRRRIRNISDLEAGTDTNDIDNTIHQTTFTSSDGTTQREWAHLAAHRDEIRSLLRDEEDVEGTDGRRGATEIDLNTKLLHDKYKDSVYYAELSQEIEEVLSEGDEESNVLNGDLPTGQQSAGFLQQLSILNSRSFKNMYRNPKLLLGNYLLTILLSLFLGTLYYNVSNDISGFQNRMGLFFFILTYFGFVTFTGLSSFALERIIFIKERSNNYYSPLAYYISKIMSEVVPLRVVPPILLSLIVYPMTGLNMKDNAFFKCIGILILFNLGISLEILTIGIIFEDLNNSIILSVLVLLGSLLFSGLFINTKNITNVAFKYLKNFSVFYYAYESLLINEVKTLMLKERKYGLNIEVPGATILSTFGFVVQNLVFDIKILALFNVVFLIMGYLALKWIVVEQK.

Residues 1-25 (MGSHRRYLYYSILSFLLLSCSVVLA) form the signal peptide. Topologically, residues 26–324 (KQDKTPFFEG…KDPTVSWQGK (299 aa)) are lumenal. N-linked (GlcNAc...) asparagine glycans are attached at residues Asn50, Asn114, Asn165, and Asn221. A helical membrane pass occupies residues 325-345 (LVLALTAVMVLALFTFATFYI). The Cytoplasmic segment spans residues 346–463 (SKSPLFRNGL…ISMDRKSFSK (118 aa)). The ABC transporter domain maps to 384-631 (LSFENITYSV…LRNEGYICPD (248 aa)). 423–430 (GGSGAGKT) serves as a coordination point for ATP. A helical transmembrane segment spans residues 464–481 (IIGFVDQDDFLLPTLTVF). Residues 482–793 (ETVLNSALLR…SFKNMYRNPK (312 aa)) are Lumenal-facing. 2 positions are modified to phosphoserine: Ser659 and Ser702. The region spanning 793–1044 (KLLLGNYLLT…IMGYLALKWI (252 aa)) is the ABC transmembrane type-2 domain. A helical transmembrane segment spans residues 794–814 (LLLGNYLLTILLSLFLGTLYY). Over 815–828 (NVSNDISGFQNRMG) the chain is Cytoplasmic. Residues 829-849 (LFFFILTYFGFVTFTGLSSFA) traverse the membrane as a helical segment. Residues 850–877 (LERIIFIKERSNNYYSPLAYYISKIMSE) lie on the Lumenal side of the membrane. The helical transmembrane segment at 878 to 898 (VVPLRVVPPILLSLIVYPMTG) threads the bilayer. At 899–909 (LNMKDNAFFKC) the chain is on the cytoplasmic side. A helical membrane pass occupies residues 910–930 (IGILILFNLGISLEILTIGII). The Lumenal segment spans residues 931–937 (FEDLNNS). Asn935 carries N-linked (GlcNAc...) asparagine glycosylation. Residues 938–958 (IILSVLVLLGSLLFSGLFINT) traverse the membrane as a helical segment. Residues 959-1000 (KNITNVAFKYLKNFSVFYYAYESLLINEVKTLMLKERKYGLN) are Cytoplasmic-facing. A helical transmembrane segment spans residues 1001 to 1021 (IEVPGATILSTFGFVVQNLVF). The Lumenal portion of the chain corresponds to 1022–1024 (DIK). Residues 1025–1045 (ILALFNVVFLIMGYLALKWIV) form a helical membrane-spanning segment. The Cytoplasmic segment spans residues 1046–1049 (VEQK).

This sequence belongs to the ABC transporter superfamily. ABCG family. Eye pigment precursor importer (TC 3.A.1.204) subfamily.

The protein localises to the endoplasmic reticulum membrane. In Saccharomyces cerevisiae (strain ATCC 204508 / S288c) (Baker's yeast), this protein is Probable ATP-dependent permease (ADP1).